Reading from the N-terminus, the 182-residue chain is NADH-quinone oxidoreductase subunit I (182 aa).

2 consecutive 4Fe-4S ferredoxin-type domains span residues 52–82 (LTRD…LQKA) and 92–121 (EFFR…LTPD). Residues C62, C65, C68, C72, C101, C104, C107, and C111 each contribute to the [4Fe-4S] cluster site.

The protein belongs to the complex I 23 kDa subunit family. NDH-1 is composed of 13 different subunits. Subunits NuoA, H, J, K, L, M, N constitute the membrane sector of the complex. [4Fe-4S] cluster is required as a cofactor.

It is found in the cell inner membrane. It catalyses the reaction a quinone + NADH + 5 H(+)(in) = a quinol + NAD(+) + 4 H(+)(out). NDH-1 shuttles electrons from NADH, via FMN and iron-sulfur (Fe-S) centers, to quinones in the respiratory chain. The immediate electron acceptor for the enzyme in this species is believed to be ubiquinone. Couples the redox reaction to proton translocation (for every two electrons transferred, four hydrogen ions are translocated across the cytoplasmic membrane), and thus conserves the redox energy in a proton gradient. This Pseudomonas entomophila (strain L48) protein is NADH-quinone oxidoreductase subunit I.